Reading from the N-terminus, the 498-residue chain is Na(+)/H(+) exchange regulatory cofactor NHE-RF4 (498 aa).

PDZ domains are found at residues Phe49–His130, Leu157–Glu235, Cys263–Glu346, and Gln394–Asn475. Ser329 carries the post-translational modification Phosphoserine.

As to quaternary structure, interacts with the C-terminal region of GUCY2C. Interacts with C-terminal region of SLC9A3 and the interactions decrease in response to elevated calcium ion levels. Interacts with the C-terminal region of SLC34A1. Interacts with USP2 isoform 2. Interacts (via the third PDZ domain) with SLC26A3 (via PDZ-binding motif). This interaction leads to decreased expression of SLC26A3 on the cell membrane resulting in its reduced exchanger activity. Phosphorylation at Ser-329 negatively regulates its interaction with SLC26A3. In terms of tissue distribution, expressed in kidney and small intestine. Not detected in heart, brain, spleen, lung, liver, skeletal muscle or testis.

The protein localises to the cell membrane. Its subcellular location is the cytoplasm. In terms of biological role, acts as a regulatory protein that associates with GUCY2C and negatively modulates its heat-stable enterotoxin-mediated activation. Stimulates SLC9A3 activity in the presence of elevated calcium ions. The sequence is that of Na(+)/H(+) exchange regulatory cofactor NHE-RF4 (Nherf4) from Mus musculus (Mouse).